The sequence spans 218 residues: Sodium channel regulatory subunit beta-1 (218 aa).

The first 18 residues, 1–18 (MGRLLALVVGAALVSSAC), serve as a signal peptide directing secretion. The Extracellular segment spans residues 19-157 (GGCVEVDSET…DKANRDMASI (139 aa)). Intrachain disulfides connect Cys-21–Cys-43 and Cys-40–Cys-121. In terms of domain architecture, Ig-like C2-type spans 22–150 (VEVDSETEAV…KIHIEVVDKA (129 aa)). Asn-93, Asn-110, Asn-114, and Asn-135 each carry an N-linked (GlcNAc...) asparagine glycan. A helical membrane pass occupies residues 158-179 (VSEIMMYVLIVVLTIWLVAEMI). Over 180–218 (YCYKKIAAATETAAQENASEYLAITSESKENCTGVQVAE) the chain is Cytoplasmic.

This sequence belongs to the sodium channel auxiliary subunit SCN1B (TC 8.A.17) family. In terms of assembly, voltage-gated sodium (Nav) channel consists of an ion-conducting pore-forming alpha subunit functional on its own that is regulated by one or more beta subunits. Interacts with SCN1A; regulatory subunit of SCN1A/Nav1.1. Interacts with SCN3A; regulatory subunit of SCN3A/Nav1.3. Interacts with SCN4A; regulatory subunit of SCN4A/Nav1.4. Interacts with SCN5A; regulatory subunit of SCN5A/Nav1.5. Interacts with SCN8A; regulatory subunit of SCN8A/Nav1.6. Interacts with SCN9A; regulatory subunit of SCN9A/Nav1.7. Interacts with SCN10A; regulatory subunit of SCN10A/Nav1.8. Interacts with NFASC. Interacts with TMEM65. In terms of tissue distribution, the overall expression of isoform 1 and isoform 2 is very similar. Isoform 1 is abundantly expressed in skeletal muscle, heart and brain. Isoform 2 is highly expressed in brain and skeletal muscle and present at a very low level in heart, placenta, lung, liver, kidney and pancreas. In brain, isoform 2 is most abundant in the cerebellum, followed by the cerebral cortex and occipital lobe, while isoform 1 levels are higher in the cortex compared to the cerebellum. Isoform 2 is expressed in many regions of the brain, including cerebellar Purkinje cells, cortex pyramidal neurons and many of the neuronal fibers throughout the brain (at protein level). Also detected in dorsal root ganglion, in fibers of the spinal nerve and in cortical neurons and their processes (at protein level).

It localises to the cell membrane. It is found in the perikaryon. Its subcellular location is the cell projection. The protein localises to the axon. The protein resides in the secreted. Functionally, regulatory subunit of multiple voltage-gated sodium (Nav) channels directly mediating the depolarization of excitable membranes. Navs, also called VGSCs (voltage-gated sodium channels) or VDSCs (voltage-dependent sodium channels), operate by switching between closed and open conformations depending on the voltage difference across the membrane. In the open conformation they allow Na(+) ions to selectively pass through the pore, along their electrochemical gradient. The influx of Na+ ions provokes membrane depolarization, initiating the propagation of electrical signals throughout cells and tissues. The accessory beta subunits participate in localization and functional modulation of the Nav channels. Modulates the activity of SCN1A/Nav1.1, SCN2A/Nav1.2, SCN3A/Nav1.3, SCN4A/Nav1.4, SCN5A/Nav1.5, SCN8A/Nav1.6, SCN9A/Nav1.7 and SCN10A/Nav1.8. In terms of biological role, cell adhesion molecule that plays a critical role in neuronal migration and pathfinding during brain development. Stimulates neurite outgrowth. Has no regulatory function on the SCN2A sodium channel complex. The sequence is that of Sodium channel regulatory subunit beta-1 from Homo sapiens (Human).